Consider the following 431-residue polypeptide: Synaptotagmin-11 (431 aa).

Residues 1–15 (MAEITNIRPSFDVSP) are Vesicular-facing. The chain crosses the membrane as a helical span at residues 16–36 (VVAGLIGASVLVVCVSVTVFV). At 37–431 (WSCCHQQAEK…VAKWHSLSEY (395 aa)) the chain is on the cytoplasmic side. A Phosphoserine modification is found at Ser134. The segment at 134–154 (SPITSLTPGESKTTSPSSPEE) is disordered. A compositionally biased stretch (low complexity) spans 140–151 (TPGESKTTSPSS). 2 consecutive C2 domains span residues 157–279 (MLGS…QLTR) and 291–426 (SRGE…AKWH). Asp250, Ser253, and Asp256 together coordinate Ca(2+).

Belongs to the synaptotagmin family. As to quaternary structure, homodimer. Can also form heterodimers. Interacts with PRKN. Interacts (via C2 2 domain) with AGO2 and SND1; the interaction with SND1 is direct. Interacts with KIF1A; the interaction increases in presence of calcium. Ca(2+) serves as cofactor. Ubiquitinated, at least by PRKN, and targeted to the proteasome complex for degradation. Ubiquitination is inhibited by ATP13A2.

The protein resides in the cytoplasmic vesicle membrane. Its subcellular location is the perikaryon. It is found in the golgi apparatus. It localises to the trans-Golgi network membrane. The protein localises to the recycling endosome membrane. The protein resides in the lysosome membrane. Its subcellular location is the cytoplasmic vesicle. It is found in the phagosome. It localises to the cell projection. The protein localises to the axon. The protein resides in the dendrite. Its subcellular location is the postsynaptic density. It is found in the clathrin-coated vesicle membrane. Its function is as follows. Synaptotagmin family member involved in vesicular and membrane trafficking which does not bind Ca(2+). Inhibits clathrin-mediated and bulk endocytosis, functions to ensure precision in vesicle retrieval. Plays an important role in dopamine transmission by regulating endocytosis and the vesicle-recycling process. Essential component of a neuronal vesicular trafficking pathway that differs from the synaptic vesicle trafficking pathway but is crucial for development and synaptic plasticity. In macrophages and microglia, inhibits the conventional cytokine secretion, of at least IL6 and TNF, and phagocytosis. In astrocytes, regulates lysosome exocytosis, mechanism required for the repair of injured astrocyte cell membrane. Required for the ATP13A2-mediated regulation of the autophagy-lysosome pathway. This Homo sapiens (Human) protein is Synaptotagmin-11.